The sequence spans 89 residues: Small ribosomal subunit protein uS15 (89 aa).

The protein belongs to the universal ribosomal protein uS15 family. In terms of assembly, part of the 30S ribosomal subunit. Forms a bridge to the 50S subunit in the 70S ribosome, contacting the 23S rRNA.

In terms of biological role, one of the primary rRNA binding proteins, it binds directly to 16S rRNA where it helps nucleate assembly of the platform of the 30S subunit by binding and bridging several RNA helices of the 16S rRNA. Functionally, forms an intersubunit bridge (bridge B4) with the 23S rRNA of the 50S subunit in the ribosome. This is Small ribosomal subunit protein uS15 from Bifidobacterium longum subsp. infantis (strain ATCC 15697 / DSM 20088 / JCM 1222 / NCTC 11817 / S12).